Consider the following 179-residue polypeptide: tRNA (cytidine(56)-2'-O)-methyltransferase (179 aa).

S-adenosyl-L-methionine-binding positions include L82, 112–116 (GAEKV), and 130–137 (VGNQPHSE).

It belongs to the aTrm56 family. In terms of assembly, homodimer.

The protein localises to the cytoplasm. It catalyses the reaction cytidine(56) in tRNA + S-adenosyl-L-methionine = 2'-O-methylcytidine(56) in tRNA + S-adenosyl-L-homocysteine + H(+). In terms of biological role, specifically catalyzes the AdoMet-dependent 2'-O-ribose methylation of cytidine at position 56 in tRNAs. The protein is tRNA (cytidine(56)-2'-O)-methyltransferase of Methanococcus maripaludis (strain DSM 14266 / JCM 13030 / NBRC 101832 / S2 / LL).